The chain runs to 172 residues: HTH-type transcriptional regulator IscR (172 aa).

The region spanning 2 to 131 (RLTSKGRYAV…NNITLGELMR (130 aa)) is the HTH rrf2-type domain. Positions 28–51 (LADISERQGISLSYLEQLFSRLRK) form a DNA-binding region, H-T-H motif. The [2Fe-2S] cluster site is built by cysteine 92, cysteine 98, and cysteine 104.

The cofactor is [2Fe-2S] cluster.

Functionally, regulates the transcription of several operons and genes involved in the biogenesis of Fe-S clusters and Fe-S-containing proteins. This is HTH-type transcriptional regulator IscR from Photobacterium profundum (strain SS9).